Here is a 430-residue protein sequence, read N- to C-terminus: Phosphomethylpyrimidine synthase (430 aa).

Substrate is bound by residues Asn-67, Met-96, Tyr-125, His-161, 183–185 (SRG), 224–227 (DALR), and Glu-263. His-267 lines the Zn(2+) pocket. Tyr-290 contributes to the substrate binding site. A Zn(2+)-binding site is contributed by His-331. [4Fe-4S] cluster is bound by residues Cys-406, Cys-409, and Cys-413.

Belongs to the ThiC family. Homodimer. Requires [4Fe-4S] cluster as cofactor.

It carries out the reaction 5-amino-1-(5-phospho-beta-D-ribosyl)imidazole + S-adenosyl-L-methionine = 4-amino-2-methyl-5-(phosphooxymethyl)pyrimidine + CO + 5'-deoxyadenosine + formate + L-methionine + 3 H(+). Its pathway is cofactor biosynthesis; thiamine diphosphate biosynthesis. Functionally, catalyzes the synthesis of the hydroxymethylpyrimidine phosphate (HMP-P) moiety of thiamine from aminoimidazole ribotide (AIR) in a radical S-adenosyl-L-methionine (SAM)-dependent reaction. In Campylobacter jejuni subsp. doylei (strain ATCC BAA-1458 / RM4099 / 269.97), this protein is Phosphomethylpyrimidine synthase.